A 125-amino-acid chain; its full sequence is Large ribosomal subunit protein uL18 (125 aa).

It belongs to the universal ribosomal protein uL18 family. In terms of assembly, part of the 50S ribosomal subunit; part of the 5S rRNA/L5/L18/L25 subcomplex. Contacts the 5S and 23S rRNAs.

Functionally, this is one of the proteins that bind and probably mediate the attachment of the 5S RNA into the large ribosomal subunit, where it forms part of the central protuberance. This is Large ribosomal subunit protein uL18 from Anaplasma marginale (strain Florida).